A 341-amino-acid chain; its full sequence is Malate dehydrogenase 2, mitochondrial (341 aa).

The N-terminal 22 residues, 1 to 22 (MFRSMIVRSASPVKQGLLRRGF), are a transit peptide targeting the mitochondrion. NAD(+) is bound by residues 36–42 (GAAGGIG) and aspartate 62. The substrate site is built by arginine 109 and arginine 115. Residues asparagine 122 and 145 to 147 (ISN) each bind NAD(+). Residues asparagine 147 and arginine 181 each contribute to the substrate site. Residue histidine 205 is the Proton acceptor of the active site. An NAD(+)-binding site is contributed by methionine 256.

This sequence belongs to the LDH/MDH superfamily. MDH type 1 family. As to quaternary structure, homodimer. In terms of tissue distribution, expressed in rosette leaves at low levels.

It is found in the mitochondrion matrix. It catalyses the reaction (S)-malate + NAD(+) = oxaloacetate + NADH + H(+). Functionally, catalyzes a reversible NAD-dependent dehydrogenase reaction involved in central metabolism and redox homeostasis between organelle compartments. Required for carbon dioxide and energy partitioning in leaves. May limit photorespiration during the dark phase. Can convert 2-ketoglutarate to L-2-hydroxyglutarate in vitro. The protein is Malate dehydrogenase 2, mitochondrial of Arabidopsis thaliana (Mouse-ear cress).